A 67-amino-acid chain; its full sequence is MPPGIPRGAMCVQRFDDSRNSAIHITYRISLRSSSMREPRDPLLKVFNILKFPVTKILVFDKNLMNR.

This is an uncharacterized protein from Saccharomyces cerevisiae (strain ATCC 204508 / S288c) (Baker's yeast).